The following is a 736-amino-acid chain: MISMIINKAIDLGQGKIISIETGKMAKQADGSVVVRLGDTMVLATVVSSKKTPPPNQDYFPLQVEYREKYSAAGKFPGGFFKRESRPSEKEILSARLIDRALRPLFPDGYLFETQIIVTVISSDQINDADVLGGLAASAAIMVSDIPFHNAMSEVRVGRINGKFIINPDVNELVNSDLDICIGGTTDTICMLEGEMKEISEAEMLDAIKFGHDAIRRLCALQNEIAAEVAKPARPFAPAVIPSELTDLVRGLCETRLRELAYTPLRKEDRAEQTAAIYREIIQSTVEHFKAAISPEEIQADPSKALCLNEHIIDEQIHAVEKKVMRHMILDDAKRLDGRTLEEVRPISIELGIIPRAHGSALFTRGETQALVTITLGTKKDAQSVDNLTNNADKKFMLHYNFPPFSVGETGRIGSTGRREIGHGNLAERAIKMVAPPEQEFPYTVRIVSDILESNGSSSMASVCGGTLALMDGGVPIRKPVSGIAMGLIKEGSNYAVLSDILGNEDHLGDMDFKVSGTRDGITACQMDIKIDGLDYHILESALEQARRGRLHILDKMEEAIPSARVELAQFAPRLTTIQVPVDAIGLIIGKGGETIRSITEETGAEINIEDDGTVTIACSSVEGTHAALATIKTLLAKPEVGTIYLGKVRDVRDELGAFVEFLPKTDGLVHISEISATERVAKVSDHLKIGDRIKVKLVDVRKDPRTGKTRFALSMRAVETDAANGAPQENNQENQ.

Positions 506 and 512 each coordinate Mg(2+). Residues 573 to 632 (PRLTTIQVPVDAIGLIIGKGGETIRSITEETGAEINIEDDGTVTIACSSVEGTHAALATI) form the KH domain. An S1 motif domain is found at 642–717 (GTIYLGKVRD…GKTRFALSMR (76 aa)).

The protein belongs to the polyribonucleotide nucleotidyltransferase family. Mg(2+) serves as cofactor.

It localises to the cytoplasm. It carries out the reaction RNA(n+1) + phosphate = RNA(n) + a ribonucleoside 5'-diphosphate. In terms of biological role, involved in mRNA degradation. Catalyzes the phosphorolysis of single-stranded polyribonucleotides processively in the 3'- to 5'-direction. In Chlorobium limicola (strain DSM 245 / NBRC 103803 / 6330), this protein is Polyribonucleotide nucleotidyltransferase.